The following is a 232-amino-acid chain: Large ribosomal subunit protein uL1 (232 aa).

This sequence belongs to the universal ribosomal protein uL1 family. In terms of assembly, part of the 50S ribosomal subunit.

Its function is as follows. Binds directly to 23S rRNA. The L1 stalk is quite mobile in the ribosome, and is involved in E site tRNA release. Functionally, protein L1 is also a translational repressor protein, it controls the translation of the L11 operon by binding to its mRNA. The sequence is that of Large ribosomal subunit protein uL1 from Bacillus licheniformis (strain ATCC 14580 / DSM 13 / JCM 2505 / CCUG 7422 / NBRC 12200 / NCIMB 9375 / NCTC 10341 / NRRL NRS-1264 / Gibson 46).